The chain runs to 145 residues: MRLVVAAVGRVKDKPLRAAMDEYLGRIRRYVACDEIEIQDGPPAKVGPLLARASAGASVIAMEVGGKALGSEAFAAGVERWGSRGKGVVAFLIGGADGLPPDVSAAADDRWSLSPLTFPHRLARLVLIEQLYRAMTLLRGEPYAH.

S-adenosyl-L-methionine contacts are provided by residues Gly94 and 113–118 (LSPLTF).

The protein belongs to the RNA methyltransferase RlmH family. As to quaternary structure, homodimer.

It is found in the cytoplasm. It catalyses the reaction pseudouridine(1915) in 23S rRNA + S-adenosyl-L-methionine = N(3)-methylpseudouridine(1915) in 23S rRNA + S-adenosyl-L-homocysteine + H(+). Specifically methylates the pseudouridine at position 1915 (m3Psi1915) in 23S rRNA. The polypeptide is Ribosomal RNA large subunit methyltransferase H (Sorangium cellulosum (strain So ce56) (Polyangium cellulosum (strain So ce56))).